Reading from the N-terminus, the 510-residue chain is MLIYILSGLGVLVGALLGYVVAKRNIEKQLLLAKKDAEHIIKDAEKEASEIKKKAVIESREELHKLREEWEKERKEREEEIRYLEERLIKREEMVSKREELLDKKENYVEELRKELDQRQRDLEAKEKELTERFEKLAGITPAQAKEMVLEEAREKYEYEIAKVYSQIKARYEEDSEKYAKKVIADAIQRYAPEYSGEVTVSTIMLPNDDMKGRLIGREGRNIRAFEKVTGVDLIIDDTPEMVTVSCFNPLRREIAKRTIEKLVADGRIHPTRIEEMYEKAKAEVEKIIREAGQEATFVTGVGGLHPEIIKLLGRLKFRTSYGQNVLNHSIEVALIAGLIASELGVNVEKAKRGGLLHDIGKALDHEVEGSHTVIGAEILRRYGESREIINMVMAHHGEEEPVTPEAVIVAAADALSAARPGARREDVENYIKRLIKLEEIAKSFKYVENAYAIQAGREVRVIVQPDKIDDVLADKLSHDIAIKIEEELQYPGVLKVVVIREKRSVAYAK.

Residues 1-21 form a helical membrane-spanning segment; sequence MLIYILSGLGVLVGALLGYVV. The KH domain maps to 200–260; it reads TVSTIMLPND…LRREIAKRTI (61 aa). One can recognise an HD domain in the interval 326 to 419; that stretch reads VLNHSIEVAL…VAAADALSAA (94 aa).

The protein belongs to the RNase Y family.

It localises to the cell membrane. Functionally, endoribonuclease that initiates mRNA decay. In Thermosipho melanesiensis (strain DSM 12029 / CIP 104789 / BI429), this protein is Ribonuclease Y.